The following is a 124-amino-acid chain: MKGTLTRAALAAGGMMVTSAVMAGSLALPTAQSLAGQWEVADSERQCQIEFLANEQSETNGYQLVDRQRCLQSVFAAEVVAGAGPDGIALLQADGSTLAFFSRDGDLYRNQLGAGDALTLKALA.

Positions 1 to 24 (MKGTLTRAALAAGGMMVTSAVMAG) are cleaved as a signal peptide. Cysteines 47 and 70 form a disulfide.

This sequence belongs to the protease inhibitor I38 family. As to quaternary structure, monomer.

The protein resides in the periplasm. In terms of biological role, inhibitor of the alkaline protease. Inhibits SMP by formation of a non-covalent complex with a molar ratio of 1:1 and shows a high specificity. This Serratia marcescens protein is Alkaline proteinase inhibitor (inh).